The chain runs to 561 residues: Mercuric reductase (561 aa).

The HMA domain maps to 2-65; it reads THLKITGMTC…AVAGLGYKAT (64 aa). A metal cation-binding residues include Cys-11 and Cys-14. Ala-110, Gly-130, and Thr-135 together coordinate FAD. A disulfide bridge links Cys-136 with Cys-141. The FAD site is built by Lys-145, Ala-211, Asp-403, and Val-411. The Hg(2+) site is built by Cys-558 and Cys-559.

Belongs to the class-I pyridine nucleotide-disulfide oxidoreductase family. As to quaternary structure, homodimer. It depends on FAD as a cofactor.

It carries out the reaction Hg + NADP(+) + H(+) = Hg(2+) + NADPH. In terms of biological role, resistance to Hg(2+) in bacteria appears to be governed by a specialized system which includes mercuric reductase. MerA protein is responsible for volatilizing mercury as Hg(0). Plays a pivotal role in mercury resistance under thiol-depleted conditions and cell protection. Protects cells under thiol-depleted conditions. In Pseudomonas aeruginosa, this protein is Mercuric reductase (merA).